The chain runs to 469 residues: 3-isopropylmalate dehydratase large subunit (469 aa).

The [4Fe-4S] cluster site is built by cysteine 347, cysteine 410, and cysteine 413.

The protein belongs to the aconitase/IPM isomerase family. LeuC type 1 subfamily. Heterodimer of LeuC and LeuD. Requires [4Fe-4S] cluster as cofactor.

The catalysed reaction is (2R,3S)-3-isopropylmalate = (2S)-2-isopropylmalate. Its pathway is amino-acid biosynthesis; L-leucine biosynthesis; L-leucine from 3-methyl-2-oxobutanoate: step 2/4. Catalyzes the isomerization between 2-isopropylmalate and 3-isopropylmalate, via the formation of 2-isopropylmaleate. The polypeptide is 3-isopropylmalate dehydratase large subunit (Burkholderia thailandensis (strain ATCC 700388 / DSM 13276 / CCUG 48851 / CIP 106301 / E264)).